The following is a 977-amino-acid chain: Receptor-like protein kinase 7 (977 aa).

Positions methionine 1–serine 28 are cleaved as a signal peptide. Residues aspartate 29–arginine 608 lie on the Extracellular side of the membrane. LRR repeat units lie at residues arginine 71–glutamate 95, isoleucine 96–asparagine 119, and threonine 121–glutamine 145. N-linked (GlcNAc...) asparagine glycosylation is found at asparagine 73 and asparagine 119. Residues asparagine 152 and asparagine 167 are each glycosylated (N-linked (GlcNAc...) asparagine). LRR repeat units lie at residues alanine 168–leucine 194, lysine 195–leucine 218, threonine 219–leucine 242, asparagine 244–asparagine 265, lysine 267–leucine 289, threonine 290–glutamate 312, phenylalanine 313–leucine 337, aspartate 339–asparagine 361, glycine 362–cysteine 385, leucine 386–leucine 409, lysine 411–glycine 433, lysine 434–threonine 457, glutamate 458–leucine 481, lysine 482–cysteine 505, methionine 507–leucine 529, proline 530–leucine 553, and leucine 555–glycine 578. The N-linked (GlcNAc...) asparagine glycan is linked to asparagine 204. N-linked (GlcNAc...) asparagine glycans are attached at residues asparagine 252 and asparagine 268. Asparagine 318 carries an N-linked (GlcNAc...) asparagine glycan. N-linked (GlcNAc...) asparagine glycosylation is found at asparagine 373 and asparagine 399. N-linked (GlcNAc...) asparagine glycans are attached at residues asparagine 536 and asparagine 577. The chain crosses the membrane as a helical span at residues valine 609–leucine 629. Over tyrosine 630–serine 977 the chain is Cytoplasmic. The Protein kinase domain occupies isoleucine 666 to arginine 959. ATP contacts are provided by residues isoleucine 672–valine 680 and lysine 694. Aspartate 805 (proton acceptor) is an active-site residue.

The protein belongs to the protein kinase superfamily. Ser/Thr protein kinase family. Interacts with PIP1. Expressed in roots, stems and dry seeds. Expressed at junctions between organs, such as the insertion zones of stamens, petals and sepals, the transition zones of floral stem and pedicel, pedicel and silique, and floral stem and cauline leaves.

It localises to the membrane. It carries out the reaction L-seryl-[protein] + ATP = O-phospho-L-seryl-[protein] + ADP + H(+). It catalyses the reaction L-threonyl-[protein] + ATP = O-phospho-L-threonyl-[protein] + ADP + H(+). Functionally, plays a role in pattern-triggered immunity (PTI) signaling induced by pathogen-associated molecular patterns (PAMPs). Acts as a receptor for PIP1 defense peptide. PIP1 is an endogenous secreted peptide that acts as elicitor of immune response and positive regulator of defense response. Involved in the control of seed germination speed, in tolerance to oxidative stress and in maintaining seed longevity. The sequence is that of Receptor-like protein kinase 7 from Arabidopsis thaliana (Mouse-ear cress).